A 454-amino-acid chain; its full sequence is tRNA modification GTPase MnmE (454 aa).

(6S)-5-formyl-5,6,7,8-tetrahydrofolate contacts are provided by R23, E80, and K120. Residues 216–377 (GMKVVIAGRP…LRNHLKQSMG (162 aa)) form the TrmE-type G domain. Residue N226 coordinates K(+). GTP-binding positions include 226-231 (NAGKSS), 245-251 (TDIAGTT), 270-273 (DTAG), 335-338 (NKAD), and 358-360 (SAR). Residue S230 coordinates Mg(2+). Residues T245, I247, and T250 each contribute to the K(+) site. T251 contacts Mg(2+). K454 serves as a coordination point for (6S)-5-formyl-5,6,7,8-tetrahydrofolate.

The protein belongs to the TRAFAC class TrmE-Era-EngA-EngB-Septin-like GTPase superfamily. TrmE GTPase family. Homodimer. Heterotetramer of two MnmE and two MnmG subunits. Requires K(+) as cofactor.

It is found in the cytoplasm. In terms of biological role, exhibits a very high intrinsic GTPase hydrolysis rate. Involved in the addition of a carboxymethylaminomethyl (cmnm) group at the wobble position (U34) of certain tRNAs, forming tRNA-cmnm(5)s(2)U34. This Citrobacter koseri (strain ATCC BAA-895 / CDC 4225-83 / SGSC4696) protein is tRNA modification GTPase MnmE.